Here is a 213-residue protein sequence, read N- to C-terminus: Pyrrolidone-carboxylate peptidase (213 aa).

Catalysis depends on residues glutamate 78, cysteine 141, and histidine 165.

Belongs to the peptidase C15 family. As to quaternary structure, homotetramer.

The protein localises to the cytoplasm. It carries out the reaction Release of an N-terminal pyroglutamyl group from a polypeptide, the second amino acid generally not being Pro.. Removes 5-oxoproline from various penultimate amino acid residues except L-proline. This Clostridium perfringens (strain 13 / Type A) protein is Pyrrolidone-carboxylate peptidase.